The primary structure comprises 428 residues: Adenylosuccinate synthetase (428 aa).

Residues 12-18 and 40-42 contribute to the GTP site; these read GDEGKGK and GHT. Residue Asp13 is the Proton acceptor of the active site. Mg(2+) contacts are provided by Asp13 and Gly40. Residues 13 to 16, 38 to 41, Thr128, Arg142, Gln223, Thr238, and Arg302 contribute to the IMP site; these read DEGK and NAGH. His41 (proton donor) is an active-site residue. Residue 298–304 participates in substrate binding; it reads VTTGRPR. Residues Arg304, 330-332, and 412-414 contribute to the GTP site; these read KLD and GVG.

It belongs to the adenylosuccinate synthetase family. As to quaternary structure, homodimer. The cofactor is Mg(2+).

It is found in the cytoplasm. The enzyme catalyses IMP + L-aspartate + GTP = N(6)-(1,2-dicarboxyethyl)-AMP + GDP + phosphate + 2 H(+). The protein operates within purine metabolism; AMP biosynthesis via de novo pathway; AMP from IMP: step 1/2. Functionally, plays an important role in the de novo pathway of purine nucleotide biosynthesis. Catalyzes the first committed step in the biosynthesis of AMP from IMP. The chain is Adenylosuccinate synthetase from Halothermothrix orenii (strain H 168 / OCM 544 / DSM 9562).